Here is a 912-residue protein sequence, read N- to C-terminus: Lateral signaling target protein 2 homolog (912 aa).

Over residues 323–332 (NVNTSNNSDN) the composition is skewed to low complexity. 4 disordered regions span residues 323 to 360 (NVNT…SSFY), 455 to 610 (ADSG…ESSQ), 664 to 745 (NSSP…ASSA), and 769 to 846 (GGGS…APPR). Positions 333 to 355 (SDSRVDDSPNDELRHESETRDNR) are enriched in basic and acidic residues. Residues 455 to 468 (ADSGLGTANPSVDN) show a composition bias toward polar residues. Acidic residues predominate over residues 486–505 (SSEEGEIDEYDNEEDDEDSD). Positions 530-544 (YRTHKQQHHHRHRRS) are enriched in basic residues. 2 stretches are compositionally biased toward polar residues: residues 545–556 (SGSIMSATSSRK) and 572–590 (VPSN…DTSP). The span at 591-610 (SSGNQSECSSTSSTTGESSQ) shows a compositional bias: low complexity. Positions 682-699 (DKPKEPDPTDLFEFRASE) are enriched in basic and acidic residues. Polar residues-rich tracts occupy residues 705 to 717 (PGQN…QSIY), 735 to 745 (PGTSPIRASSA), 780 to 801 (ERSV…ATDS), and 822 to 834 (SRSS…NGTS). Residues 850 to 910 (DGDAPRCMAC…VCRDCYVREV (61 aa)) form an FYVE-type zinc finger. Zn(2+)-binding residues include Cys856, Cys859, Cys872, Cys875, Cys880, Cys883, Cys902, and Cys905.

This sequence belongs to the lst-2 family.

Functionally, negative regulator of epidermal growth factor receptor (EGFR) signaling. In Aedes aegypti (Yellowfever mosquito), this protein is Lateral signaling target protein 2 homolog.